Here is a 47-residue protein sequence, read N- to C-terminus: Ruminococcin-A (47 aa).

The first 23 residues, 1 to 23, serve as a signal peptide directing secretion; sequence MRNDVLTLTNPMEENELEQILGG. 2 positions are modified to 2,3-didehydrobutyrine: threonine 30 and threonine 39. The segment at residues 30–35 is a cross-link (beta-methyllanthionine (Thr-Cys)); the sequence is TISHEC. Residues 32–46 constitute a cross-link (lanthionine (Ser-Cys)); that stretch reads SHECNMNTWQFLFTC. Residues 45 to 47 constitute a cross-link (beta-methyllanthionine (Thr-Cys)); sequence TCC.

The protein belongs to the type A lantibiotic family. Post-translationally, maturation of lantibiotics involves the enzymatic conversion of Thr, and Ser into dehydrated AA and the formation of thioether bonds with cysteine. This is followed by membrane translocation and cleavage of the modified precursor.

The protein localises to the secreted. Lanthionine-containing peptide antibiotic (lantibiotic) active on Gram-positive bacteria. The bactericidal activity of lantibiotics is based on depolarization of energized bacterial cytoplasmic membranes, initiated by the formation of aqueous transmembrane pores. Ruminococcin A is a broad spectrum bacteriocin exhibiting activity against a wide range of pathogenic clostridia and B.longum. This Blautia hansenii (Ruminococcus hansenii) protein is Ruminococcin-A (rumA1).